The chain runs to 763 residues: MAP7 domain-containing protein 2 (763 aa).

Residues 1-11 (MERSGGNGAGA) show a composition bias toward gly residues. 3 disordered regions span residues 1 to 72 (MERS…REKC), 102 to 127 (LEEQ…LREE), and 140 to 531 (ERTQ…KAMI). Residues 12 to 31 (RAGAPSEGAAKGSSLLSAKS) are compositionally biased toward low complexity. Residues 53 to 72 (LKSDERQRLAKERREEREKC) are compositionally biased toward basic and acidic residues. 2 stretches are compositionally biased toward polar residues: residues 184-212 (PSDT…NLPK) and 241-251 (LKSSYKSSPTR). Residues 312–321 (KRSSSPVKSK) show a composition bias toward low complexity. Basic and acidic residues-rich tracts occupy residues 354–372 (ETLK…KEGA), 381–420 (PREE…EHSA), and 437–531 (LAEK…KAMI). Residues 434–575 (AKILAEKRRQ…QERLERKKRI (142 aa)) are a coiled coil.

Belongs to the MAP7 family. In terms of assembly, interacts (via N-terminus) with microtubules; facilitates microtubule stabilization. Interacts with kinesin-1 family members, KIF5A, KIF5B and KIF5C. In terms of tissue distribution, detected only in the brain and testis (at the protein level).

The protein localises to the cytoplasm. It is found in the cytoskeleton. It localises to the microtubule organizing center. The protein resides in the centrosome. Its subcellular location is the cell projection. The protein localises to the axon. Microtubule-stabilizing protein involved in the control of cell motility and neurite outgrowth. Acts as a critical cofactor for kinesin transport; in the proximal axon regulates kinesin-1 family members, KIF5A, KIF5B and KIF5C recruitment to microtubules and contributes to kinesin-1-mediated transport in the axons. The chain is MAP7 domain-containing protein 2 (Map7d2) from Rattus norvegicus (Rat).